The sequence spans 448 residues: DNA repair protein RadA (448 aa).

A C4-type zinc finger spans residues 10 to 27 (CSNCGNTSPKWSGQCFDC). 91 to 98 (GDPGIGKS) provides a ligand contact to ATP. A RadA KNRFG motif motif is present at residues 250–254 (KNRFG). Positions 349–448 (EVYLSIAGGL…KDLKLLLGSS (100 aa)) are lon-protease-like.

It belongs to the RecA family. RadA subfamily.

In terms of biological role, DNA-dependent ATPase involved in processing of recombination intermediates, plays a role in repairing DNA breaks. Stimulates the branch migration of RecA-mediated strand transfer reactions, allowing the 3' invading strand to extend heteroduplex DNA faster. Binds ssDNA in the presence of ADP but not other nucleotides, has ATPase activity that is stimulated by ssDNA and various branched DNA structures, but inhibited by SSB. Does not have RecA's homology-searching function. This Rickettsia bellii (strain RML369-C) protein is DNA repair protein RadA.